The chain runs to 339 residues: Replication factor C subunit 4 (339 aa).

49–56 (GPPGTGKT) serves as a coordination point for ATP.

Belongs to the activator 1 small subunits family. As to quaternary structure, heterotetramer of subunits RFC2, RFC3, RFC4 and RFC5 that can form a complex with RFC1.

The protein resides in the nucleus. Functionally, may be involved in DNA replication and thus regulate cell proliferation. The polypeptide is Replication factor C subunit 4 (RFC4) (Arabidopsis thaliana (Mouse-ear cress)).